A 242-amino-acid chain; its full sequence is Transcriptional regulatory protein btr (242 aa).

Residues 158–231 form the HTH crp-type domain; that stretch reads MRSEQRLAAF…QREVRLIDLP (74 aa). A DNA-binding region (H-T-H motif) is located at residues 191–210; the sequence is REEIGNYLGLTLETVSRLFS.

Functionally, may regulate gene expression in response to changes in oxygen levels or to changes in the redox potential of the bacterial environment. This Bordetella pertussis (strain Tohama I / ATCC BAA-589 / NCTC 13251) protein is Transcriptional regulatory protein btr (btr).